We begin with the raw amino-acid sequence, 248 residues long: Conoporin-Cn1 (248 aa).

The signal sequence occupies residues 1 to 23 (MGVQFPALKTMVTVFLLLMGNMS). An N-terminal region region spans residues 45 to 64 (TPGSSLYGVALKDLADTSYN). Phosphocholine is bound by residues glycine 120, serine 138, proline 140, tyrosine 167, and tyrosine 171.

This sequence belongs to the actinoporin family. Conoidea subfamily. Octamer or nonamer in membranes. Monomer in the soluble state. 9 isoforms are detected in the injectable venom, mainly corresponding to different oxidative states. In terms of tissue distribution, expressed by the venom duct.

Its subcellular location is the secreted. It is found in the nematocyst. The protein resides in the target cell membrane. Functionally, pore-forming protein that forms pores of around 1 nm and causes cardiac stimulation and cytolysis. The sequence is that of Conoporin-Cn1 from Conus consors (Singed cone).